The primary structure comprises 122 residues: Large ribosomal subunit protein uL14 (122 aa).

This sequence belongs to the universal ribosomal protein uL14 family. In terms of assembly, part of the 50S ribosomal subunit. Forms a cluster with proteins L3 and L19. In the 70S ribosome, L14 and L19 interact and together make contacts with the 16S rRNA in bridges B5 and B8.

Its function is as follows. Binds to 23S rRNA. Forms part of two intersubunit bridges in the 70S ribosome. This is Large ribosomal subunit protein uL14 from Acidovorax sp. (strain JS42).